The primary structure comprises 723 residues: Preterminal protein (723 aa).

The Nuclear localization signal signature appears at 453-462; sequence RLPMRRRRRR. The tract at residues 457–492 is disordered; the sequence is RRRRRRAPPPPPMSEELSEPEVEAFPPASPPRRSFE. Ser651 is subject to O-(5'-phospho-DNA)-serine.

This sequence belongs to the adenoviridae terminal protein family. As to quaternary structure, heterodimer with the polymerase; this heterodimer binds to bp 9 to 18 of the genome. Interacts with host POU2F1; POU2F1 binds to the auxiliary sequences in the inverted terminal repeats and tethers the pTP-POL heterodimer to the origin DNA thereby participating in the assembly of the pre-initiation complex (POL-TP-DBP-NFIA-POU2F1). In terms of processing, preterminal protein is used to replicate viral genome, upon genomic encapsidation it is processed first into iTP and finally into TP by adenovirus protease.

It is found in the host nucleus matrix. Protein covalently bound to the viral DNA that acts as a primer for viral genomic replication by DNA strand displacement. Assembles on the viral origin of replication in an initiation complex with viral polymerase, DBP, host NFIA and host POU2F1/OCT1. During initiation, the polymerase covalently couples the first dCTP with Ser-580 of pTP. The terminal protein stimulates the template activity over 20 fold compared to protein-free templates. Neo-synthesized viral genomes are linked to two preterminal proteins, one for each 5' end. These new genomes are encapsidated in the nucleus, and during capsid maturation by viral protease, preterminal protein is first cleaved into intermediary (iTP), then into mature TP. May play a role in host nuclear matrix localization of genomic DNA. The polypeptide is Preterminal protein (Canis lupus familiaris (Dog)).